We begin with the raw amino-acid sequence, 411 residues long: LL-diaminopimelate aminotransferase (411 aa).

The substrate site is built by Tyr-15 and Gly-42. Pyridoxal 5'-phosphate-binding positions include Tyr-72, 108-109 (SK), Tyr-132, Asn-187, Tyr-218, and 246-248 (SFS). Substrate is bound by residues Lys-109, Tyr-132, and Asn-187. N6-(pyridoxal phosphate)lysine is present on Lys-249. Pyridoxal 5'-phosphate contacts are provided by Arg-257 and Asn-292. Substrate-binding residues include Asn-292 and Arg-388.

The protein belongs to the class-I pyridoxal-phosphate-dependent aminotransferase family. LL-diaminopimelate aminotransferase subfamily. In terms of assembly, homodimer. It depends on pyridoxal 5'-phosphate as a cofactor.

It catalyses the reaction (2S,6S)-2,6-diaminopimelate + 2-oxoglutarate = (S)-2,3,4,5-tetrahydrodipicolinate + L-glutamate + H2O + H(+). It participates in amino-acid biosynthesis; L-lysine biosynthesis via DAP pathway; LL-2,6-diaminopimelate from (S)-tetrahydrodipicolinate (aminotransferase route): step 1/1. Its function is as follows. Involved in the synthesis of meso-diaminopimelate (m-DAP or DL-DAP), required for both lysine and peptidoglycan biosynthesis. Catalyzes the direct conversion of tetrahydrodipicolinate to LL-diaminopimelate. The sequence is that of LL-diaminopimelate aminotransferase from Citrifermentans bemidjiense (strain ATCC BAA-1014 / DSM 16622 / JCM 12645 / Bem) (Geobacter bemidjiensis).